The chain runs to 282 residues: Mitochondrial outer membrane protein porin (282 aa).

It belongs to the eukaryotic mitochondrial porin family.

The protein resides in the mitochondrion outer membrane. Its function is as follows. Forms a channel through the cell membrane that allows diffusion of small hydrophilic molecules. The channel adopts an open conformation at low or zero membrane potential and a closed conformation at potentials above 30-40 mV. The open state has a weak anion selectivity whereas the closed state is cation-selective. The chain is Mitochondrial outer membrane protein porin (POR1) from Candida albicans (strain SC5314 / ATCC MYA-2876) (Yeast).